The primary structure comprises 363 residues: MSAIYNFCAGPAMLPAAVMKKAQQELLDWNGQGVSVMEISHRSKEFIALTEQAESDLRELMQIPANYHVLFMHGGGRGQFSAVVNNFLGEQGKALYLVSGQWSSAALVEAQKLAGEAQIDSLNIVEKHNGLNAVVLPDLHKIDADYRYVHYCPNETVDGIEIFDELDSPWPIVADLSSTIMSREIDVSRYGLIYAGAQKNIGPSGLSIVIVRDDMLKLPSLPQSSIMDYRLAVEHDSMFNTPPTFAWYLAAEVFAWLRSTGGISSIAKINQQKAQMLYQCIDGNAFYRNGVVAANRSQMNVTFQLVNEALDSEFLKQAQIAGLVALKGHRIVGGMRASLYNAMPLDGVIALVKFMNEFAAKHS.

R42 contacts L-glutamate. Pyridoxal 5'-phosphate-binding positions include 76–77 (GR), W102, T156, D175, and Q198. K199 is subject to N6-(pyridoxal phosphate)lysine. 240–241 (NT) serves as a coordination point for pyridoxal 5'-phosphate.

The protein belongs to the class-V pyridoxal-phosphate-dependent aminotransferase family. SerC subfamily. As to quaternary structure, homodimer. Requires pyridoxal 5'-phosphate as cofactor.

The protein localises to the cytoplasm. It catalyses the reaction O-phospho-L-serine + 2-oxoglutarate = 3-phosphooxypyruvate + L-glutamate. It carries out the reaction 4-(phosphooxy)-L-threonine + 2-oxoglutarate = (R)-3-hydroxy-2-oxo-4-phosphooxybutanoate + L-glutamate. The protein operates within amino-acid biosynthesis; L-serine biosynthesis; L-serine from 3-phospho-D-glycerate: step 2/3. It functions in the pathway cofactor biosynthesis; pyridoxine 5'-phosphate biosynthesis; pyridoxine 5'-phosphate from D-erythrose 4-phosphate: step 3/5. Functionally, catalyzes the reversible conversion of 3-phosphohydroxypyruvate to phosphoserine and of 3-hydroxy-2-oxo-4-phosphonooxybutanoate to phosphohydroxythreonine. The sequence is that of Phosphoserine aminotransferase from Shewanella baltica (strain OS223).